The chain runs to 294 residues: Pyridoxal 5'-phosphate synthase subunit PdxS (294 aa).

D-ribose 5-phosphate is bound at residue aspartate 24. The active-site Schiff-base intermediate with D-ribose 5-phosphate is lysine 81. A D-ribose 5-phosphate-binding site is contributed by glycine 153. Arginine 165 contributes to the D-glyceraldehyde 3-phosphate binding site. D-ribose 5-phosphate is bound by residues glycine 214 and 235 to 236; that span reads GS.

The protein belongs to the PdxS/SNZ family. In terms of assembly, homohexamer and homododecamer. In the presence of PdxT, forms a dodecamer of heterodimers.

It carries out the reaction aldehydo-D-ribose 5-phosphate + D-glyceraldehyde 3-phosphate + L-glutamine = pyridoxal 5'-phosphate + L-glutamate + phosphate + 3 H2O + H(+). It participates in cofactor biosynthesis; pyridoxal 5'-phosphate biosynthesis. Its function is as follows. Catalyzes the formation of pyridoxal 5'-phosphate from ribose 5-phosphate (RBP), glyceraldehyde 3-phosphate (G3P) and ammonia. The ammonia is provided by the PdxT subunit. Can also use ribulose 5-phosphate and dihydroxyacetone phosphate as substrates, resulting from enzyme-catalyzed isomerization of RBP and G3P, respectively. The protein is Pyridoxal 5'-phosphate synthase subunit PdxS of Geobacillus kaustophilus (strain HTA426).